We begin with the raw amino-acid sequence, 41 residues long: Large ribosomal subunit protein bL36 (41 aa).

Belongs to the bacterial ribosomal protein bL36 family.

The chain is Large ribosomal subunit protein bL36 from Sphingopyxis alaskensis (strain DSM 13593 / LMG 18877 / RB2256) (Sphingomonas alaskensis).